Consider the following 308-residue polypeptide: Nuclear transcription factor Y subunit A-5 (308 aa).

Residues 1 to 10 (MQVFQRKEDS) show a composition bias toward basic and acidic residues. Disordered regions lie at residues 1–26 (MQVF…IQGS) and 49–71 (GLQL…GGGE). Residues 11–26 (SWGNSMPTTNSNIQGS) show a composition bias toward polar residues. A Subunit association domain (SAD) motif is present at residues 181-204 (FVNAKQYHAILRRRKHRAKLEAQN). The segment at residues 211–236 (KPYLHESRHLHALKRARGSGGRFLNT) is a DNA-binding region (NFYA/HAP2-type). The segment at 251–273 (MANGQNFSMSPHGGGSGIGSSSI) is disordered.

This sequence belongs to the NFYA/HAP2 subunit family. In terms of assembly, heterotrimeric transcription factor composed of three components, NF-YA, NF-YB and NF-YC. NF-YB and NF-YC must interact and dimerize for NF-YA association and DNA binding. In terms of tissue distribution, expressed in the whole plant, except roots. Present in etiolated seedlings.

Its subcellular location is the nucleus. In terms of biological role, stimulates the transcription of various genes by recognizing and binding to a CCAAT motif in promoters. Involved in the blue light (BL) and abscisic acid (ABA) signaling pathways. The protein is Nuclear transcription factor Y subunit A-5 (NFYA5) of Arabidopsis thaliana (Mouse-ear cress).